Consider the following 402-residue polypeptide: Type II NADH:quinone oxidoreductase (402 aa).

FAD is bound by residues 12-16 (GAGYA), 39-40 (NK), and V83. E172 is an active-site residue. Residues D302, 319 to 320 (AQ), and K379 each bind FAD.

Belongs to the NADH dehydrogenase family. It depends on FAD as a cofactor.

It localises to the cell membrane. The catalysed reaction is a quinone + NADH + H(+) = a quinol + NAD(+). Its function is as follows. Alternative, nonproton pumping NADH:quinone oxidoreductase that delivers electrons to the respiratory chain by oxidation of NADH and reduction of quinones, and contributes to the regeneration of NAD(+). The polypeptide is Type II NADH:quinone oxidoreductase (Staphylococcus saprophyticus subsp. saprophyticus (strain ATCC 15305 / DSM 20229 / NCIMB 8711 / NCTC 7292 / S-41)).